Reading from the N-terminus, the 30-residue chain is Circulin-D (30 aa).

Positions 1 to 30 (KIPCGESCVWIPCVTSIFNCKCENKVCYHD) form a cross-link, cyclopeptide (Lys-Asp). Cystine bridges form between Cys-4–Cys-20, Cys-8–Cys-22, and Cys-13–Cys-27.

Post-translationally, this is a cyclic peptide.

Probably participates in a plant defense mechanism. Inhibits the cytopathic effects of the human immunodeficiency virus. The sequence is that of Circulin-D from Chassalia parviflora.